A 469-amino-acid polypeptide reads, in one-letter code: 3-isopropylmalate dehydratase large subunit (469 aa).

[4Fe-4S] cluster-binding residues include C350, C410, and C413.

The protein belongs to the aconitase/IPM isomerase family. LeuC type 1 subfamily. Heterodimer of LeuC and LeuD. [4Fe-4S] cluster is required as a cofactor.

The enzyme catalyses (2R,3S)-3-isopropylmalate = (2S)-2-isopropylmalate. The protein operates within amino-acid biosynthesis; L-leucine biosynthesis; L-leucine from 3-methyl-2-oxobutanoate: step 2/4. In terms of biological role, catalyzes the isomerization between 2-isopropylmalate and 3-isopropylmalate, via the formation of 2-isopropylmaleate. This is 3-isopropylmalate dehydratase large subunit from Mesorhizobium japonicum (strain LMG 29417 / CECT 9101 / MAFF 303099) (Mesorhizobium loti (strain MAFF 303099)).